The chain runs to 238 residues: uncharacterized protein (238 aa).

This is an uncharacterized protein from Acheta domesticus (House cricket).